Consider the following 209-residue polypeptide: Protein-L-isoaspartate O-methyltransferase (209 aa).

Ser59 is a catalytic residue.

This sequence belongs to the methyltransferase superfamily. L-isoaspartyl/D-aspartyl protein methyltransferase family.

It localises to the cytoplasm. The enzyme catalyses [protein]-L-isoaspartate + S-adenosyl-L-methionine = [protein]-L-isoaspartate alpha-methyl ester + S-adenosyl-L-homocysteine. Its function is as follows. Catalyzes the methyl esterification of L-isoaspartyl residues in peptides and proteins that result from spontaneous decomposition of normal L-aspartyl and L-asparaginyl residues. It plays a role in the repair and/or degradation of damaged proteins. The protein is Protein-L-isoaspartate O-methyltransferase of Helicobacter pylori (strain P12).